The chain runs to 21 residues: Endo-1,4-beta-xylanase A (21 aa).

This sequence belongs to the glycosyl hydrolase 10 (cellulase F) family.

It carries out the reaction Endohydrolysis of (1-&gt;4)-beta-D-xylosidic linkages in xylans.. It participates in glycan degradation; xylan degradation. In Dictyoglomus sp. (strain B4A), this protein is Endo-1,4-beta-xylanase A.